Here is a 238-residue protein sequence, read N- to C-terminus: ATP synthase subunit a (238 aa).

The next 5 membrane-spanning stretches (helical) occupy residues 18 to 38, 76 to 96, 114 to 134, 166 to 186, and 193 to 213; these read LTLL…VFWA, YSLL…LGLF, NLAF…IEGV, SLAI…GLIV, and VYWW…SVFI.

Belongs to the ATPase A chain family. In terms of assembly, F-type ATPases have 2 components, CF(1) - the catalytic core - and CF(0) - the membrane proton channel. CF(1) has five subunits: alpha(3), beta(3), gamma(1), delta(1), epsilon(1). CF(0) has three main subunits: a(1), b(2) and c(9-12). The alpha and beta chains form an alternating ring which encloses part of the gamma chain. CF(1) is attached to CF(0) by a central stalk formed by the gamma and epsilon chains, while a peripheral stalk is formed by the delta and b chains.

The protein resides in the cell membrane. Key component of the proton channel; it plays a direct role in the translocation of protons across the membrane. In Streptococcus pyogenes serotype M49 (strain NZ131), this protein is ATP synthase subunit a.